Consider the following 358-residue polypeptide: 1-deoxy-D-xylulose 5-phosphate reductoisomerase (358 aa).

Residues Thr-7, Gly-8, Ser-9, Ile-10, Gly-31, Asn-33, and Asn-114 each coordinate NADPH. Lys-115 serves as a coordination point for 1-deoxy-D-xylulose 5-phosphate. NADPH is bound at residue Glu-116. Mn(2+) is bound at residue Asp-134. 1-deoxy-D-xylulose 5-phosphate contacts are provided by Ser-135, Glu-136, Ser-157, and His-180. Mn(2+) is bound at residue Glu-136. Gly-186 serves as a coordination point for NADPH. Ser-193, Asn-198, Lys-199, and Glu-202 together coordinate 1-deoxy-D-xylulose 5-phosphate. Mn(2+) is bound at residue Glu-202.

The protein belongs to the DXR family. Mg(2+) is required as a cofactor. Mn(2+) serves as cofactor.

It carries out the reaction 2-C-methyl-D-erythritol 4-phosphate + NADP(+) = 1-deoxy-D-xylulose 5-phosphate + NADPH + H(+). It functions in the pathway isoprenoid biosynthesis; isopentenyl diphosphate biosynthesis via DXP pathway; isopentenyl diphosphate from 1-deoxy-D-xylulose 5-phosphate: step 1/6. Its function is as follows. Catalyzes the NADPH-dependent rearrangement and reduction of 1-deoxy-D-xylulose-5-phosphate (DXP) to 2-C-methyl-D-erythritol 4-phosphate (MEP). The protein is 1-deoxy-D-xylulose 5-phosphate reductoisomerase of Wolinella succinogenes (strain ATCC 29543 / DSM 1740 / CCUG 13145 / JCM 31913 / LMG 7466 / NCTC 11488 / FDC 602W) (Vibrio succinogenes).